The following is a 448-amino-acid chain: Phosphoglucosamine mutase (448 aa).

The Phosphoserine intermediate role is filled by Ser-99. 4 residues coordinate Mg(2+): Ser-99, Asp-239, Asp-241, and Asp-243. At Ser-99 the chain carries Phosphoserine.

This sequence belongs to the phosphohexose mutase family. It depends on Mg(2+) as a cofactor. Activated by phosphorylation.

The catalysed reaction is alpha-D-glucosamine 1-phosphate = D-glucosamine 6-phosphate. Functionally, catalyzes the conversion of glucosamine-6-phosphate to glucosamine-1-phosphate. This is Phosphoglucosamine mutase from Lachnoclostridium phytofermentans (strain ATCC 700394 / DSM 18823 / ISDg) (Clostridium phytofermentans).